We begin with the raw amino-acid sequence, 361 residues long: 3-dehydroquinate synthase (361 aa).

NAD(+) contacts are provided by residues 73–78 (DAEAGK), 107–111 (GAATD), 131–132 (TT), Lys-144, Lys-153, and 171–174 (TLET). Residues Glu-186, His-249, and His-265 each contribute to the Zn(2+) site.

It belongs to the sugar phosphate cyclases superfamily. Dehydroquinate synthase family. NAD(+) serves as cofactor. It depends on Co(2+) as a cofactor. The cofactor is Zn(2+).

The protein localises to the cytoplasm. It carries out the reaction 7-phospho-2-dehydro-3-deoxy-D-arabino-heptonate = 3-dehydroquinate + phosphate. It participates in metabolic intermediate biosynthesis; chorismate biosynthesis; chorismate from D-erythrose 4-phosphate and phosphoenolpyruvate: step 2/7. Catalyzes the conversion of 3-deoxy-D-arabino-heptulosonate 7-phosphate (DAHP) to dehydroquinate (DHQ). The sequence is that of 3-dehydroquinate synthase from Mycobacterium leprae (strain TN).